We begin with the raw amino-acid sequence, 278 residues long: Large ribosomal subunit protein uL2c (278 aa).

Residues 224–267 (VVMNPVDHPHGGGEGRAPIGRKKPLTPWGHTALGGRSRKNHKYS) form a disordered region.

This sequence belongs to the universal ribosomal protein uL2 family. Part of the 50S ribosomal subunit.

The protein localises to the plastid. It localises to the chloroplast. In Huperzia lucidula (Shining clubmoss), this protein is Large ribosomal subunit protein uL2c (rpl2).